The chain runs to 644 residues: Zinc transporter ZIP4 (644 aa).

An N-terminal signal peptide occupies residues 1–27 (MAILAWLEPRPLLAVLVLVLTMRMAQP). Residues 28-323 (AHLLTLLSSG…QNQLSQAEKY (296 aa)) lie on the Extracellular side of the membrane. 3 cysteine pairs are disulfide-bonded: cysteine 59–cysteine 64, cysteine 67–cysteine 103, and cysteine 153–cysteine 188. The disordered stretch occupies residues 231–259 (TETHSDHHHQEKRVNRQGPTPLTAPNSSS). Residues 233 to 244 (THSDHHHQEKRV) show a composition bias toward basic and acidic residues. Residues 247–259 (QGPTPLTAPNSSS) are compositionally biased toward polar residues. Cysteine 266 and cysteine 305 are disulfide-bonded. A helical membrane pass occupies residues 324 to 344 (LYGSLATLLICLCSTFGLLLL). The Cytoplasmic segment spans residues 345 to 355 (TCAACSTAAHY). A helical transmembrane segment spans residues 356 to 376 (VIQTFLGMAVGALTGDALLHL). The Extracellular portion of the chain corresponds to 377-404 (TPKVLGLHQHGGDSEHRADSHGPQTTWR). The helical transmembrane segment at 405–425 (LVVALSGLYVFFLFEKLCDLL) threads the bilayer. Residues 426 to 495 (LPQDPEDRKG…KSPELRLLPY (70 aa)) lie on the Cytoplasmic side of the membrane. Residues 449-451 (LQL) carry the Essential for SLC39A4 endocytosis motif. Residues 456-467 (LRPPKQPHEGSR) are compositionally biased toward basic and acidic residues. Residues 456 to 484 (LRPPKQPHEGSRADLVAEESPELLSPEPR) are disordered. Residues 496 to 515 (MITLGDGLHNFADGLAVGAA) traverse the membrane as a helical segment. Zn(2+) contacts are provided by histidine 504, asparagine 505, and aspartate 508. Over 516–523 (FASSWKTG) the chain is Extracellular. Residues 524 to 550 (LATSLAVFCHEVPHELGDFAALLHAGL) traverse the membrane as a helical segment. Residues histidine 533, glutamate 534, and histidine 537 each contribute to the Zn(2+) site. The Cytoplasmic portion of the chain corresponds to 551–555 (PVSRA). A helical membrane pass occupies residues 556-576 (LLLNLASGLTAFAGLYVALAL). The Extracellular portion of the chain corresponds to 577 to 583 (GVGEESE). A helical membrane pass occupies residues 584-604 (SWTLAVAIGLFLYVALCDMLP). Residues 605-614 (AMLNVRDPRP) lie on the Cytoplasmic side of the membrane. The helical transmembrane segment at 615–635 (WLLFLLHNVGLLGGWAVLLLL) threads the bilayer. Residues 636 to 644 (SLYEDSIAL) lie on the Extracellular side of the membrane.

This sequence belongs to the ZIP transporter (TC 2.A.5) family. In terms of assembly, homodimer. In terms of processing, the extracellular N-terminal ectodomain is cleaved when cells are Zn(2+) deficient, N-terminally cleaved SLC39A4 is internalized at a faster rate. Under excess Zn(2+) conditions, SLC39A4 on the cell surface is rapidly endocytosed, ubiquitinated and degraded. Post-translationally, glycosylated.

It is found in the cell membrane. It localises to the recycling endosome membrane. The protein resides in the apical cell membrane. It carries out the reaction Zn(2+)(in) = Zn(2+)(out). Its function is as follows. Selective transporter that mediates the uptake of Zn(2+). Plays an essential role for dietary zinc uptake from small intestine. The Zn(2+) uniporter activity is regulated by zinc availability. Also exhibits polyspecific binding and transport of Cu(2+), Cd(2+) and possibly Ni(2+) but at higher concentrations. The chain is Zinc transporter ZIP4 from Pteropus alecto (Black flying fox).